Here is a 417-residue protein sequence, read N- to C-terminus: Serine hydroxymethyltransferase (417 aa).

Residues Leu121 and 125–127 (GHL) each bind (6S)-5,6,7,8-tetrahydrofolate. At Lys229 the chain carries N6-(pyridoxal phosphate)lysine. (6S)-5,6,7,8-tetrahydrofolate is bound at residue 355-357 (SPF).

Belongs to the SHMT family. As to quaternary structure, homodimer. Requires pyridoxal 5'-phosphate as cofactor.

The protein resides in the cytoplasm. It carries out the reaction (6R)-5,10-methylene-5,6,7,8-tetrahydrofolate + glycine + H2O = (6S)-5,6,7,8-tetrahydrofolate + L-serine. It functions in the pathway one-carbon metabolism; tetrahydrofolate interconversion. Its pathway is amino-acid biosynthesis; glycine biosynthesis; glycine from L-serine: step 1/1. Its function is as follows. Catalyzes the reversible interconversion of serine and glycine with tetrahydrofolate (THF) serving as the one-carbon carrier. This reaction serves as the major source of one-carbon groups required for the biosynthesis of purines, thymidylate, methionine, and other important biomolecules. Also exhibits THF-independent aldolase activity toward beta-hydroxyamino acids, producing glycine and aldehydes, via a retro-aldol mechanism. The sequence is that of Serine hydroxymethyltransferase from Buchnera aphidicola subsp. Acyrthosiphon pisum (strain 5A).